Reading from the N-terminus, the 365-residue chain is tRNA/tmRNA (uracil-C(5))-methyltransferase (365 aa).

5 residues coordinate S-adenosyl-L-methionine: Gln189, Tyr217, Asn222, Glu238, and Asp298. Cys323 functions as the Nucleophile in the catalytic mechanism. Glu357 serves as the catalytic Proton acceptor.

This sequence belongs to the class I-like SAM-binding methyltransferase superfamily. RNA M5U methyltransferase family. TrmA subfamily.

The catalysed reaction is uridine(54) in tRNA + S-adenosyl-L-methionine = 5-methyluridine(54) in tRNA + S-adenosyl-L-homocysteine + H(+). The enzyme catalyses uridine(341) in tmRNA + S-adenosyl-L-methionine = 5-methyluridine(341) in tmRNA + S-adenosyl-L-homocysteine + H(+). Its function is as follows. Dual-specificity methyltransferase that catalyzes the formation of 5-methyluridine at position 54 (m5U54) in all tRNAs, and that of position 341 (m5U341) in tmRNA (transfer-mRNA). The protein is tRNA/tmRNA (uracil-C(5))-methyltransferase of Shewanella sp. (strain ANA-3).